The primary structure comprises 433 residues: Cell division protein FtsZ homolog 1, chloroplastic (433 aa).

A chloroplast-targeting transit peptide spans 1 to 66 (MAIIPLAQLN…TRSKSMRLRC (66 aa)). Ser67 is modified (N-acetylserine). Residues 83–87 (GGGNN), 170–172 (GTG), Glu201, Arg205, and Asp249 contribute to the GTP site. The interval 399–433 (GSSGQQENKGMSLPHQKQSPSTISTKSSSPRRLFF) is disordered. Positions 414-433 (QKQSPSTISTKSSSPRRLFF) are enriched in low complexity.

The protein belongs to the FtsZ family. Aggregates to form a contractile ring-like structure; contraction of the ring was accompanied by an increase in the filament turnover rate. This aggregation is regulated in midchloroplast stroma by MIND1 (repressor) and MINE1 (promoter). Self-interacts and binds to FTSZ2-1 in heteromers to form two morphologically distinct types of filaments, termed type-I (smooth filaments) and type-II (rough filaments), in a GTP-dependent manner. Interacts with ARC3. Part of a complex made of ARC3, ARC6, FTSZ1 and FTSZ2. As to expression, in pollen grain, restricted to plastids of vegetative cells. Also present in pollen tubes plastids.

Its subcellular location is the plastid. The protein localises to the chloroplast stroma. The protein resides in the chloroplast thylakoid membrane. In terms of biological role, exhibits GTPase activity. Component of the plastid division machinery that forms a contractile ring at the division site. Required for plastid division in a dose-dependent manner. Involved in epidermal plastids division in a MINE1-dependent manner. Involved in blue light-induced chloroplast movements. May regulate thylakoid development. In the vegetative shoot apex, at the shoot apical meristem (SAM), where the proplastid-to-chloroplast transition takes place, contributes equally with FTSZ2-1 in the L2 layer to plastid division. This Arabidopsis thaliana (Mouse-ear cress) protein is Cell division protein FtsZ homolog 1, chloroplastic.